The sequence spans 139 residues: MHRLRVTDPVVQGKLEESDSTHELVKRLEILPQNNMTPEEYTLMKRNYLVFLIAQYNFDQYIETTHGIKRKKHIEGLKANLKPSALSADSASLSGLLSTSLTTPSLSSTPTSLTSMPGLSISGPSTTDTIDSKKKPKAK.

Over residues 100–120 (SLTTPSLSSTPTSLTSMPGLS) the composition is skewed to low complexity. The tract at residues 100-139 (SLTTPSLSSTPTSLTSMPGLSISGPSTTDTIDSKKKPKAK) is disordered.

This sequence belongs to the herpesviridae small capsomere-interacting protein family. In terms of assembly, interacts with the major capsid protein/MCP.

Its subcellular location is the virion. It localises to the host nucleus. Functionally, participates in the assembly of the infectious particles by decorating the outer surface of the capsid shell and thus forming a layer between the capsid and the tegument. Complexes composed of the major capsid protein and small capsomere-interacting protein/SCP assemble together in the host cytoplasm and are translocated to the nucleus, where they accumulate and participate in capsid assembly. The protein is Small capsomere-interacting protein of Saimiri sciureus (Common squirrel monkey).